The primary structure comprises 160 residues: MQDADTQTTIFGNTVAELVGENLRIGIVQARFNAALTDRLAQACLVELELLGVSAKHIEHVSVPGALEIPIALQAMARRKDFDALIALGCIIRGETYHFELVSNESGAGVTRVSLDHATPIANAILTVENEDQAWARVDDKGRDAARVAVEMVNLMEELS.

5-amino-6-(D-ribitylamino)uracil-binding positions include Phe32, 66–68, and 90–92; these read ALE and CII. 95-96 provides a ligand contact to (2S)-2-hydroxy-3-oxobutyl phosphate; it reads ET. His98 serves as the catalytic Proton donor. Residue Asn123 participates in 5-amino-6-(D-ribitylamino)uracil binding. Arg137 serves as a coordination point for (2S)-2-hydroxy-3-oxobutyl phosphate.

Belongs to the DMRL synthase family.

The enzyme catalyses (2S)-2-hydroxy-3-oxobutyl phosphate + 5-amino-6-(D-ribitylamino)uracil = 6,7-dimethyl-8-(1-D-ribityl)lumazine + phosphate + 2 H2O + H(+). The protein operates within cofactor biosynthesis; riboflavin biosynthesis; riboflavin from 2-hydroxy-3-oxobutyl phosphate and 5-amino-6-(D-ribitylamino)uracil: step 1/2. Catalyzes the formation of 6,7-dimethyl-8-ribityllumazine by condensation of 5-amino-6-(D-ribitylamino)uracil with 3,4-dihydroxy-2-butanone 4-phosphate. This is the penultimate step in the biosynthesis of riboflavin. The sequence is that of 6,7-dimethyl-8-ribityllumazine synthase from Methylibium petroleiphilum (strain ATCC BAA-1232 / LMG 22953 / PM1).